Consider the following 346-residue polypeptide: Olfactory receptor 13D1 (346 aa).

Residues 1-57 (MYRFTDFDVSNISIYLNHVLFYTTQQAGDLEHMETRNYSAMTEFFLVGLSQYPELQL) are Extracellular-facing. Residue Asn-37 is glycosylated (N-linked (GlcNAc...) asparagine). A helical transmembrane segment spans residues 58–78 (FLFLLCLIMYMIILLGNSLLI). Topologically, residues 79-86 (IITILDSR) are cytoplasmic. Residues 87 to 107 (LHTPMYFFLGNLSFLDICYTS) traverse the membrane as a helical segment. At 108–131 (SSIPPMLIIFMSERKSISFIGCAL) the chain is on the extracellular side. A disulfide bridge connects residues Cys-129 and Cys-221. A helical transmembrane segment spans residues 132 to 152 (QMVVSLGLGSTECVLLAVMAY). Topologically, residues 153–171 (DHYVAICNPLRYSIIMNGV) are cytoplasmic. Residues 172-192 (LYVQMAAWSWIIGCLTSLLQT) traverse the membrane as a helical segment. At 193 to 229 (VLTMMLPFCGNNVIDHITCEILALLKLVCSDITINVL) the chain is on the extracellular side. A helical membrane pass occupies residues 230-249 (IMTVTNIVSLVILLLLIFIS). Over 250 to 269 (YVFILSSILRINCAEGRKKA) the chain is Cytoplasmic. The helical transmembrane segment at 270 to 290 (FSTCSAHSIVVILFYGSALFM) threads the bilayer. The Extracellular segment spans residues 291-303 (YMKPKSKNTNTSD). A glycan (N-linked (GlcNAc...) asparagine) is linked at Asn-300. Residues 304 to 324 (EIIGLSYGVVSPMLNPIIYSL) form a helical membrane-spanning segment. Residues 325–346 (RNKEVKEAVKKVLSRHLHLLKM) are Cytoplasmic-facing.

Belongs to the G-protein coupled receptor 1 family.

The protein localises to the cell membrane. In terms of biological role, odorant receptor. This is Olfactory receptor 13D1 (OR13D1) from Homo sapiens (Human).